A 96-amino-acid chain; its full sequence is Co-chaperonin GroES (96 aa).

It belongs to the GroES chaperonin family. As to quaternary structure, heptamer of 7 subunits arranged in a ring. Interacts with the chaperonin GroEL.

Its subcellular location is the cytoplasm. Together with the chaperonin GroEL, plays an essential role in assisting protein folding. The GroEL-GroES system forms a nano-cage that allows encapsulation of the non-native substrate proteins and provides a physical environment optimized to promote and accelerate protein folding. GroES binds to the apical surface of the GroEL ring, thereby capping the opening of the GroEL channel. This Neisseria meningitidis serogroup A / serotype 4A (strain DSM 15465 / Z2491) protein is Co-chaperonin GroES.